Reading from the N-terminus, the 274-residue chain is tRNA dimethylallyltransferase (274 aa).

The segment at 9-12 is interaction with substrate tRNA; that stretch reads DSLS.

It belongs to the IPP transferase family. As to quaternary structure, monomer. Requires Mg(2+) as cofactor.

The catalysed reaction is adenosine(37) in tRNA + dimethylallyl diphosphate = N(6)-dimethylallyladenosine(37) in tRNA + diphosphate. Catalyzes the transfer of a dimethylallyl group onto the adenine at position 37 in tRNAs that read codons beginning with uridine, leading to the formation of N6-(dimethylallyl)adenosine (i(6)A). This chain is tRNA dimethylallyltransferase (miaA), found in Helicobacter pylori (strain P12).